The following is a 477-amino-acid chain: ACT domain-containing protein ACR1 (477 aa).

ACT domains follow at residues 38 to 124 (LIKV…REVQ), 134 to 214 (AFEI…GDVS), 283 to 358 (MVNV…RASQ), and 361 to 441 (KLEI…MMPR). Positions 329 to 345 (KKNGGTLETEGQRERLR) match the Bipartite nuclear localization signal motif.

Expressed in flowers and siliques.

Its subcellular location is the nucleus. In terms of biological role, may bind amino acids. This chain is ACT domain-containing protein ACR1, found in Arabidopsis thaliana (Mouse-ear cress).